Here is a 120-residue protein sequence, read N- to C-terminus: Aspartate 1-decarboxylase (120 aa).

Catalysis depends on serine 25, which acts as the Schiff-base intermediate with substrate; via pyruvic acid. Serine 25 is modified (pyruvic acid (Ser)). Position 57 (threonine 57) interacts with substrate. The active-site Proton donor is tyrosine 58. 73 to 75 (GAA) contributes to the substrate binding site.

This sequence belongs to the PanD family. Heterooctamer of four alpha and four beta subunits. Requires pyruvate as cofactor. Post-translationally, is synthesized initially as an inactive proenzyme, which is activated by self-cleavage at a specific serine bond to produce a beta-subunit with a hydroxyl group at its C-terminus and an alpha-subunit with a pyruvoyl group at its N-terminus.

It localises to the cytoplasm. The enzyme catalyses L-aspartate + H(+) = beta-alanine + CO2. It participates in cofactor biosynthesis; (R)-pantothenate biosynthesis; beta-alanine from L-aspartate: step 1/1. Catalyzes the pyruvoyl-dependent decarboxylation of aspartate to produce beta-alanine. This Deinococcus radiodurans (strain ATCC 13939 / DSM 20539 / JCM 16871 / CCUG 27074 / LMG 4051 / NBRC 15346 / NCIMB 9279 / VKM B-1422 / R1) protein is Aspartate 1-decarboxylase.